A 310-amino-acid polypeptide reads, in one-letter code: MSKIFVFGHQNPDSDAIGSSYGYAYLKRQLGVEAEAVALGTPNEETAFVLDYFSVNAPRVVESARSEGVNQVILTDHNEFQQSISDIKDVEVIEVVDHHRVANFETANPLMMRLEPVGSASSIVYRMFKENNVEIPKDVAGLLLSGLISDTLLLKSPTTHASDPAVAEELARLAGVNLEEYGLAMLKAGTNLSSKSAEELIDIDAKTFELNGNQVRVAQVNTVDISDVLSRQAEIEEAINSSIKSNGYSDFVLMITDILNSNSEILALGSNTDKIEKAFNFVLENNHAFLKGAVSRKKQVVPQLTESFNV.

Mn(2+) contacts are provided by His9, Asp13, Asp15, Asp76, His98, and Asp150.

The protein belongs to the PPase class C family. Mn(2+) is required as a cofactor.

The protein localises to the cytoplasm. The catalysed reaction is diphosphate + H2O = 2 phosphate + H(+). The chain is Probable manganese-dependent inorganic pyrophosphatase from Streptococcus thermophilus (strain ATCC BAA-491 / LMD-9).